The sequence spans 430 residues: CinA-like protein (430 aa).

Belongs to the CinA family.

This is CinA-like protein from Prochlorococcus marinus (strain NATL2A).